Consider the following 257-residue polypeptide: Nickel import system ATP-binding protein NikD (257 aa).

The region spanning 4–245 is the ABC transporter domain; the sequence is IDIQNLTIKN…HLHPYTERLI (242 aa). An ATP-binding site is contributed by 37–44; it reads GESGAGKS.

The protein belongs to the ABC transporter superfamily. In terms of assembly, the complex is composed of two ATP-binding proteins (NikD and NikE), two transmembrane proteins (NikB and NikC) and a solute-binding protein (NikA).

The protein localises to the cell membrane. It catalyses the reaction Ni(2+)(out) + ATP + H2O = Ni(2+)(in) + ADP + phosphate + H(+). Functionally, part of the ABC transporter complex NikABCDE (Opp2) involved in nickel import. Probably responsible for energy coupling to the transport system. This chain is Nickel import system ATP-binding protein NikD, found in Staphylococcus aureus (strain MSSA476).